A 264-amino-acid chain; its full sequence is MARDITFLTVFLESCGAVNNDEAGKLLSAWTSTVRIEGPESTDSNSLYIPLLPPGMLKIKLNFKMNDRLVTEEQELFTKLREIVGSSIRFWEEQLFYQVQDVSTIENHVILSLKCTILTDAQISTFISKPRELHTHAKGYPEIYYLSELSTTVNFFSKEGNYVEISQVIPHFNEYFSSLIVSQLEFEYPMVFSMISRLRLKWQQSSLAPISYALTSNSVLLPIMLNMIAQDKSSTTAYQILCRRRGPPIQNFQIFSLPAVTYNK.

This sequence belongs to the TOP6B-like family. As to quaternary structure, interacts with REC104; seems to form a functional unit with REC104. REC102-REC104 interacts with SKI8-SPO11 and this interaction is required for proper subcellular location of the proteins during the initiation of recombination. Interacts with MEI4, REC114 and SPO11.

It is found in the nucleus. In terms of biological role, required for formation of the SPO11-mediated double-strand breaks (DSBs) that initiate meiotic recombination. May mediate the interaction between SPO11 subunits during meiosis. Also needed for homolog chromosome pairing, synaptonemal complex formation, and for the proper timing of the first meiotic division. Not required for mitosis and mitotic DNA repair mechanisms. This is Meiotic recombination protein REC102 from Saccharomyces cerevisiae (strain ATCC 204508 / S288c) (Baker's yeast).